Reading from the N-terminus, the 853-residue chain is Transforming growth factor beta receptor type 3 (853 aa).

An N-terminal signal peptide occupies residues 1–23; sequence MAVTSHHMIPVMVVLMSACLATA. Topologically, residues 24-789 are extracellular; sequence GPEPSTRCEL…IFHGLDTLTV (766 aa). N37, N144, and N493 each carry an N-linked (GlcNAc...) asparagine glycan. Cysteines 55 and 200 form a disulfide. In terms of domain architecture, ZP spans 456 to 730; the sequence is KCDHEKMVVA…PRCVTPDDAC (275 aa). A disordered region spans residues 530 to 559; sequence SPGDSSGWPDGYEDLESGDNGFPGDGDEGE. O-linked (Xyl...) (glycosaminoglycan) serine glycosylation is found at S535 and S546. 3 N-linked (GlcNAc...) asparagine glycosylation sites follow: N572, N591, and N698. Cystine bridges form between C640-C706, C661-C730, and C711-C723. The segment at 737 to 751 is interaction with TGF-beta ligand; sequence MIWTMMQNKKTFTKP. A helical membrane pass occupies residues 790–811; it reads MGIAFAAFVIGALLTGALWYIY. Over 812–853 the chain is Cytoplasmic; that stretch reads SHTGETARRQQVPTSPPASENSSAAHSIGSTQSTPCSSSSTA. The span at 820 to 836 shows a compositional bias: polar residues; it reads RQQVPTSPPASENSSAA. The interval 820–853 is disordered; it reads RQQVPTSPPASENSSAAHSIGSTQSTPCSSSSTA. Residues 838 to 853 show a composition bias toward low complexity; that stretch reads SIGSTQSTPCSSSSTA. At T842 the chain carries Phosphothreonine.

In terms of assembly, forms homodimers and homooligomers. Interacts with DYNLT4. Interacts with integrin ITGA5:ITGB1; this interaction promotes the internalization and trafficking of ITGA5:ITGB1 into endocytic vesicles. Interacts with TGFB1, BMP2, BMP5, BMP7 or GDF5 and inhibin A via the ligand binding domains. Interacts with ALK3/BMPR1A; this interaction results in the cell surface retention of BMPR1A. Interacts with ALK6/BMPR1B; this interaction enhances BMPR1B-mediated stimulation of the BMP signaling pathway. Interacts with the scaffolding protein beta-arrestin2/ARRB2; this interaction mediates internalization of TGFBR3 and thus regulates migration, actin cytoskeleton and activation of CDC42. In terms of processing, extensively modified by glycosaminoglycan groups (GAG). Post-translationally, phosphorylated in the cytoplasmic domain by the type II receptor TGFBR2 at THR-842 to mediate recruitment of ARRB2 and subsequent internalization of TGFBR2 and TGFBR3.

The protein resides in the cell membrane. It localises to the secreted. Its subcellular location is the extracellular space. It is found in the extracellular matrix. In terms of biological role, cell surface receptor that regulates diverse cellular processes including cell proliferation, differentiation, migration, and apoptosis. Initiates BMP, inhibin, and TGF-beta signaling pathways by interacting with different ligands including TGFB1, BMP2, BMP5, BMP7 or GDF5. Alternatively, acts as a cell surface coreceptor for BMP ligands, serving to enhance ligand binding by differentially regulating BMPR1A/ALK3 and BMPR1B/ALK6 receptor trafficking. Promotes epithelial cell adhesion, focal adhesion formation and integrin signaling during epithelial cell spreading on fibronectin. By interacting with the scaffolding protein beta-arrestin2/ARRB2, regulates migration or actin cytoskeleton and promotes the activation of CDC42 as well as the inhibition of NF-kappa-B. In gonadotrope cells, acts as an inhibin A coreceptor and regulates follicle-stimulating hormone (FSH) levels and female fertility. Plays a role in the inhibition of directed and random cell migration in epithelial cells by altering the actin cytoskeletal organization. Participates in epithelial-mesenchymal transformation (EMT) upon binding to BMP2 or TGFB2, by activating the PAR6/SMURF1/RHOA pathway. In Rattus norvegicus (Rat), this protein is Transforming growth factor beta receptor type 3 (Tgfbr3).